An 89-amino-acid chain; its full sequence is Small ribosomal subunit protein uS15 (89 aa).

The protein belongs to the universal ribosomal protein uS15 family. As to quaternary structure, part of the 30S ribosomal subunit. Forms a bridge to the 50S subunit in the 70S ribosome, contacting the 23S rRNA.

Functionally, one of the primary rRNA binding proteins, it binds directly to 16S rRNA where it helps nucleate assembly of the platform of the 30S subunit by binding and bridging several RNA helices of the 16S rRNA. In terms of biological role, forms an intersubunit bridge (bridge B4) with the 23S rRNA of the 50S subunit in the ribosome. In Pediococcus pentosaceus (strain ATCC 25745 / CCUG 21536 / LMG 10740 / 183-1w), this protein is Small ribosomal subunit protein uS15.